A 317-amino-acid chain; its full sequence is 17-beta-hydroxysteroid dehydrogenase type 6 (317 aa).

Residues 1–17 (MWLYLAAFVGLYYLLHW) form the signal peptide. An NAD(+)-binding site is contributed by 33-57 (FITGCDSGFGNLLARQLDARGLRVL). Asn161 carries an N-linked (GlcNAc...) asparagine glycan. A substrate-binding site is contributed by Ser164. Tyr176 acts as the Proton acceptor in catalysis. N-linked (GlcNAc...) asparagine glycosylation is found at Asn215 and Asn256.

The protein belongs to the short-chain dehydrogenases/reductases (SDR) family. Detected in liver and prostate (at protein level). Detected in adult liver, lung, brain, placenta, prostate, adrenal gland, testis, mammary gland, spleen, spinal cord and uterus. Detected in caudate nucleus, and at lower levels in amygdala, corpus callosum, hippocampus, substantia nigra and thalamus. Detected in fetal lung, liver and brain.

It is found in the microsome membrane. Its subcellular location is the early endosome membrane. The enzyme catalyses all-trans-retinol--[retinol-binding protein] + NAD(+) = all-trans-retinal--[retinol-binding protein] + NADH + H(+). The catalysed reaction is all-trans-retinol + NAD(+) = all-trans-retinal + NADH + H(+). It catalyses the reaction androsterone + NAD(+) = 5alpha-androstan-3,17-dione + NADH + H(+). It carries out the reaction testosterone + NAD(+) = androst-4-ene-3,17-dione + NADH + H(+). The enzyme catalyses 5alpha-androstane-3alpha,17beta-diol + NAD(+) = 17beta-hydroxy-5alpha-androstan-3-one + NADH + H(+). The catalysed reaction is 17beta-estradiol + NAD(+) = estrone + NADH + H(+). It catalyses the reaction 17beta-estradiol + NADP(+) = estrone + NADPH + H(+). It carries out the reaction 3alpha-hydroxy-5alpha-pregnan-20-one + NAD(+) = 5alpha-pregnane-3,20-dione + NADH + H(+). The enzyme catalyses 5alpha-androstane-3beta,17beta-diol + NAD(+) = 17beta-hydroxy-5alpha-androstan-3-one + NADH + H(+). The catalysed reaction is 3beta-hydroxy-5alpha-androstan-17-one + NAD(+) = 5alpha-androstan-3,17-dione + NADH + H(+). In terms of biological role, NAD-dependent oxidoreductase with broad substrate specificity that shows both oxidative and reductive activity (in vitro). Has 17-beta-hydroxysteroid dehydrogenase activity towards various steroids (in vitro). Converts 5-alpha-androstan-3-alpha,17-beta-diol to androsterone and estradiol to estrone (in vitro). Has 3-alpha-hydroxysteroid dehydrogenase activity towards androsterone (in vitro). Has retinol dehydrogenase activity towards all-trans-retinol (in vitro). Can convert androsterone to epi-androsterone. Androsterone is first oxidized to 5-alpha-androstane-3,17-dione and then reduced to epi-andosterone. Can act on both C-19 and C-21 3-alpha-hydroxysteroids. This chain is 17-beta-hydroxysteroid dehydrogenase type 6 (HSD17B6), found in Homo sapiens (Human).